We begin with the raw amino-acid sequence, 158 residues long: UPF0262 protein RHOS4_22360 (158 aa).

It belongs to the UPF0262 family.

The chain is UPF0262 protein RHOS4_22360 from Cereibacter sphaeroides (strain ATCC 17023 / DSM 158 / JCM 6121 / CCUG 31486 / LMG 2827 / NBRC 12203 / NCIMB 8253 / ATH 2.4.1.) (Rhodobacter sphaeroides).